Reading from the N-terminus, the 453-residue chain is Exopolyphosphatase PRUNE1 (453 aa).

Met-1 bears the N-acetylmethionine mark. Positions 28, 30, 106, and 179 each coordinate Mn(2+). The short motif at 106–108 is the DHH motif element; that stretch reads DHH. Residues 393 to 420 form an essential for homodimerization region; it reads SLLSGLSQDEEEPPLPPTPMNSLVDECP. The segment at 396–419 is disordered; the sequence is SGLSQDEEEPPLPPTPMNSLVDEC. Ser-399 carries the post-translational modification Phosphoserine. Phosphothreonine is present on Thr-410. Phosphoserine is present on Ser-414.

This sequence belongs to the PPase class C family. Prune subfamily. Homooligomer. Able to homodimerize via its C-terminal domain. Interacts with NME1. Interacts with GSK3; at focal adhesion complexes where paxillin and vinculin are colocalized. Requires Mn(2+) as cofactor.

The protein resides in the cytoplasm. The protein localises to the nucleus. Its subcellular location is the cell junction. It localises to the focal adhesion. It catalyses the reaction diphosphate + H2O = 2 phosphate + H(+). Activated by magnesium ions and inhibited by manganese ions. Inhibited by dipyridamole, moderately sensitive to IBMX and inhibited by vinpocetine. Phosphodiesterase (PDE) that has higher activity toward cAMP than cGMP, as substrate. Plays a role in cell proliferation, is able to induce cell motility and acts as a negative regulator of NME1. In Bos taurus (Bovine), this protein is Exopolyphosphatase PRUNE1 (PRUNE1).